The chain runs to 329 residues: Malate dehydrogenase (329 aa).

12 to 18 contributes to the NAD(+) binding site; sequence GAAGQIC. Residues R95 and R101 each coordinate substrate. NAD(+) contacts are provided by residues N108, Q115, and 132 to 134; that span reads VGN. Substrate is bound by residues N134 and R165. H190 serves as the catalytic Proton acceptor.

This sequence belongs to the LDH/MDH superfamily. MDH type 2 family. In terms of assembly, homodimer.

The catalysed reaction is (S)-malate + NAD(+) = oxaloacetate + NADH + H(+). Functionally, catalyzes the reversible oxidation of malate to oxaloacetate. This chain is Malate dehydrogenase, found in Aquaspirillum arcticum.